The chain runs to 431 residues: Keratin, type I cytoskeletal 40 (431 aa).

The interval 1-89 (MTSDCSSTHC…CEDGVFTSNE (89 aa)) is head. Residues 89–400 (EKETMQFLND…GLLDSEDSRL (312 aa)) form the IF rod domain. The coil 1A stretch occupies residues 90 to 124 (KETMQFLNDRLASYLEKVRSLEETNAELESRIQEQ). Positions 125–135 (CEQDIPMVCPD) are linker 1. The coil 1B stretch occupies residues 136-236 (YQRYFNTIED…HEEEVNLLRE (101 aa)). The segment at 237–252 (QLGDRLSVELDTAPTL) is linker 12. The coil 2 stretch occupies residues 253-396 (DLNRVLDEMR…NTYWGLLDSE (144 aa)). A tail region spans residues 397–431 (DSRLSCSPCSTTCTSSNTCEPCSAYVICTVENCCL).

The protein belongs to the intermediate filament family. In terms of assembly, heterotetramer of two type I and two type II keratins. Expressed in skin and scalp. Also very weakly expressed in tongue, breast, colon and small intestine. In the hair follicle, it is specifically present in the upper hair cuticle. Not present in the upper cortex (at protein level).

Functionally, may play a role in late hair differentiation. The sequence is that of Keratin, type I cytoskeletal 40 (KRT40) from Homo sapiens (Human).